A 346-amino-acid polypeptide reads, in one-letter code: UDP-N-acetylenolpyruvoylglucosamine reductase (346 aa).

In terms of domain architecture, FAD-binding PCMH-type spans 18–189 (LRAQARAFIA…VSVVFALKTH (172 aa)). Residue R165 is part of the active site. Catalysis depends on S240, which acts as the Proton donor. E336 is a catalytic residue.

This sequence belongs to the MurB family. FAD is required as a cofactor.

It localises to the cytoplasm. The enzyme catalyses UDP-N-acetyl-alpha-D-muramate + NADP(+) = UDP-N-acetyl-3-O-(1-carboxyvinyl)-alpha-D-glucosamine + NADPH + H(+). It functions in the pathway cell wall biogenesis; peptidoglycan biosynthesis. In terms of biological role, cell wall formation. The sequence is that of UDP-N-acetylenolpyruvoylglucosamine reductase from Neisseria meningitidis serogroup A / serotype 4A (strain DSM 15465 / Z2491).